The sequence spans 369 residues: Outer membrane porin F (369 aa).

Residues 1 to 21 (MKRNILAVVIPALLVAGTANA) form the signal peptide. A beta stranded transmembrane segment spans residues 22–27 (AEIFNK). Residue Asp28 is a topological domain, periplasmic. Residues 29-44 (GNKLDLYGKVDVRHQF) form a beta stranded membrane-spanning segment. Residues 45-55 (ADKRSSEDGDD) are Extracellular-facing. The chain crosses the membrane as a beta stranded span at residues 56–68 (SYARIGIKGETQI). Over 69–70 (SD) the chain is Periplasmic. Residues 71–83 (QLTGFGRWEYNVK) traverse the membrane as a beta stranded segment. The Extracellular portion of the chain corresponds to 84–97 (AKGTEAAVAESSTR). The chain crosses the membrane as a beta stranded span at residues 98-106 (LAFAGLKFA). Over 107-108 (NY) the chain is Periplasmic. The beta stranded transmembrane segment at 109–115 (GSLDYGR) threads the bilayer. At 116 to 150 (NYGVNYDVNAWTDVLPIFGGDAMAQTDNFMTGRST) the chain is on the extracellular side. Residues 151–157 (GLLTYRN) traverse the membrane as a beta stranded segment. The Periplasmic portion of the chain corresponds to 158–165 (TDFFGLVD). The beta stranded transmembrane segment at 166-177 (GLNFALQYQGQN) threads the bilayer. Residues 178 to 193 (SDRTKNKGRDTERSNG) are Extracellular-facing. A beta stranded membrane pass occupies residues 194-204 (DGYGLSSTYDV). Over 205–206 (GY) the chain is Periplasmic. A beta stranded transmembrane segment spans residues 207–219 (GITVGGSYANSAR). Residues 220–234 (TADQKEKVSDAYGKR) lie on the Extracellular side of the membrane. Residues 235 to 246 (AEAWNIGAKYDA) traverse the membrane as a beta stranded segment. Residue Asn247 is a topological domain, periplasmic. Residues 248 to 259 (NVYLAAMYGETR) traverse the membrane as a beta stranded segment. The Extracellular segment spans residues 260–278 (NMTRYTRTIADTDATLIAN). The chain crosses the membrane as a beta stranded span at residues 279–291 (KTQNIELTAQYLF). The Periplasmic segment spans residues 292–294 (SDL). A beta stranded transmembrane segment spans residues 295 to 308 (GLKPSLAYVQSKGK). Residues 309-320 (DLTEGKGFNGDL) lie on the Extracellular side of the membrane. The beta stranded transmembrane segment at 321–332 (VKYVSVGTYYYF) threads the bilayer. The Periplasmic portion of the chain corresponds to 333–334 (NK). A beta stranded transmembrane segment spans residues 335 to 344 (NLSTYVDYKI). Topologically, residues 345–359 (NLLKKDNELGVNARN) are extracellular. A beta stranded transmembrane segment spans residues 360 to 369 (VFGVGLTYQF).

This sequence belongs to the Gram-negative porin family. In terms of assembly, homotrimer.

It localises to the cell outer membrane. Forms pores that allow passive diffusion of small molecules across the outer membrane. The polypeptide is Outer membrane porin F (ompF) (Xenorhabdus nematophila (strain ATCC 19061 / DSM 3370 / CCUG 14189 / LMG 1036 / NCIMB 9965 / AN6)).